The chain runs to 648 residues: Nucleoside triphosphatase I (648 aa).

The Helicase ATP-binding domain occupies 48–212; it reads FIGLKNLNSM…NNLIGLLRPN (165 aa). Position 61–68 (61–68) interacts with ATP; that stretch reads WDTGMGKT. Positions 150-153 match the DEXH box motif; that stretch reads DEVH. Residues 378–541 form the Helicase C-terminal domain; the sequence is YIETCKIILN…KINVIFDLLK (164 aa). Residues 467–533 form a binding to the cap-specific mRNA (nucleoside-2'-O-)-methyltransferase region; that stretch reads DIIILDMPWN…DIIKDKQGKI (67 aa).

The protein belongs to the helicase family. NPH I subfamily. In terms of assembly, monomer. Interacts (via C-terminus) with RAP94 (via N-terminus). Interacts with the cap-specific mRNA (nucleoside-2'-O-)-methyltransferase.

It localises to the virion. It carries out the reaction a ribonucleoside 5'-triphosphate + H2O = a ribonucleoside 5'-diphosphate + phosphate + H(+). DNA-dependent ATPase required for providing the needed energy to achieve the termination of early transcripts. Acts in concert with the RAP94 subunit of the virion RNA polymerase and the capping enzyme/VTF to catalyze release of UUUUUNU-containing nascent RNA from the elongation complex. NPH-I must bind ssDNA in order to exhibit ATPase activity. The chain is Nucleoside triphosphatase I (NPH1) from Amsacta (AmEPV).